The following is a 247-amino-acid chain: tRNA pseudouridine synthase A (247 aa).

Residue Asp-58 is the Nucleophile of the active site. Tyr-116 contributes to the substrate binding site.

Belongs to the tRNA pseudouridine synthase TruA family. As to quaternary structure, homodimer.

It carries out the reaction uridine(38/39/40) in tRNA = pseudouridine(38/39/40) in tRNA. Functionally, formation of pseudouridine at positions 38, 39 and 40 in the anticodon stem and loop of transfer RNAs. The chain is tRNA pseudouridine synthase A from Hydrogenobaculum sp. (strain Y04AAS1).